The primary structure comprises 341 residues: S-adenosylmethionine:tRNA ribosyltransferase-isomerase (341 aa).

Belongs to the QueA family. In terms of assembly, monomer.

The protein localises to the cytoplasm. The catalysed reaction is 7-aminomethyl-7-carbaguanosine(34) in tRNA + S-adenosyl-L-methionine = epoxyqueuosine(34) in tRNA + adenine + L-methionine + 2 H(+). It participates in tRNA modification; tRNA-queuosine biosynthesis. In terms of biological role, transfers and isomerizes the ribose moiety from AdoMet to the 7-aminomethyl group of 7-deazaguanine (preQ1-tRNA) to give epoxyqueuosine (oQ-tRNA). The chain is S-adenosylmethionine:tRNA ribosyltransferase-isomerase from Halothermothrix orenii (strain H 168 / OCM 544 / DSM 9562).